The sequence spans 476 residues: Serine/threonine-protein kinase Chk1 (476 aa).

Residues 9–265 form the Protein kinase domain; that stretch reads WDLVQTLGEG…IPDIKKDRWY (257 aa). Residues 15 to 23 and lysine 38 contribute to the ATP site; that span reads LGEGAYGEV. Aspartate 130 functions as the Proton acceptor in the catalytic mechanism. Residues 272 to 329 are disordered; it reads GTKRGRVSSGGVTESPGALPKHIRSDTDFSPVKSALGEDKASYSTSQPEPGTGGALWD. Position 280 is a phosphoserine; by PKB/AKT1 (serine 280). At serine 296 the chain carries Phosphoserine. Serine 317 bears the Phosphoserine; by ATM and ATR mark. Serine 345 carries the post-translational modification Phosphoserine. The tract at residues 391–476 is autoinhibitory region; sequence RSLRDVCEKM…STQKVWLPPP (86 aa).

Belongs to the protein kinase superfamily. CAMK Ser/Thr protein kinase family. NIM1 subfamily. In terms of processing, phosphorylated by ATR in a RAD17-dependent manner in response to ultraviolet irradiation and inhibition of DNA replication. Phosphorylated by ATM in response to ionizing irradiation. Phosphorylation at Ser-345 induces a change in the conformation of the protein and activates the kinase activity. Phosphorylation at Ser-345 also increases binding to 14-3-3 proteins and promotes nuclear retention.

The protein resides in the nucleus. It is found in the chromosome. The protein localises to the cytoplasm. It localises to the cytoskeleton. Its subcellular location is the microtubule organizing center. The protein resides in the centrosome. The catalysed reaction is L-seryl-[protein] + ATP = O-phospho-L-seryl-[protein] + ADP + H(+). The enzyme catalyses L-threonyl-[protein] + ATP = O-phospho-L-threonyl-[protein] + ADP + H(+). Activated through phosphorylation by atr or atm in response to DNA damage or inhibition of DNA replication. In terms of biological role, serine/threonine-protein kinase which is required for checkpoint-mediated cell cycle arrest and activation of DNA repair in response to the presence of DNA damage or unreplicated DNA. May also negatively regulate cell cycle progression during unperturbed cell cycles. This regulation is achieved by a number of mechanisms that together help to preserve the integrity of the genome. Recognizes the substrate consensus sequence [R-X-X-S/T]. Binds to and phosphorylates CDC25A, CDC25B and CDC25C. This inhibits their activity through proteasomal degradation, nucleo-cytoplasmic shuttling and inhibition by proteins of the 13-3-3 family. Inhibition of CDC25 leads to increased inhibitory tyrosine phosphorylation of CDK-cyclin complexes and blocks cell cycle progression. May promote DNA repair, regulate chromatin assembly and the transcription of genes that regulate cell-cycle progression. May also play a role in replication fork maintenance. The protein is Serine/threonine-protein kinase Chk1 (CHEK1) of Gallus gallus (Chicken).